The primary structure comprises 286 residues: F-box/SPRY domain-containing protein 1 (286 aa).

Ala-2 carries the N-acetylalanine modification. An F-box domain is found at 33–82 (SGVGGRLPSRVLELVFSYLELSELRSCALVCKHWYRCLHGDENSEVWRSL). Residues 92–284 (LRTDILCNLP…VTLVYLGKPL (193 aa)) form the B30.2/SPRY domain.

This sequence belongs to the FBXO45/Fsn family. Forms a complex with MYCBP2 and SKP1. Interacts with HEY1; leading to FBXO45 nuclear translocation. Interacts (via SPRY domain) with CDH2. As to expression, expressed speciffically in the central nervous system, including cerebellum, medulla oblongata, olfactory bulb, hippocampus, cortex and brain stem.

The protein resides in the secreted. The protein localises to the postsynaptic cell membrane. Its subcellular location is the presynaptic cell membrane. It localises to the nucleus. Its pathway is protein modification; protein ubiquitination. Its function is as follows. Component of E3 ubiquitin ligase complex consisting of FBXO45, MYCBP2 and SKP1. Functions in substrate recognition but plays also an important role in assembly of the complex. Required for normal neuromuscular synaptogenesis, axon pathfinding and neuronal migration. Regulates neuron migration during brain development through interaction with N-cadherin/CDH2 after secretion via a non-classical mechanism. Plays a role in the regulation of neurotransmission at mature neurons. May control synaptic activity by controlling UNC13A via ubiquitin dependent pathway. Specifically recognizes TP73, promoting its ubiquitination and degradation. Polyubiquitinates NMNAT2, an adenylyltransferase that acts as an axon maintenance factor, and regulates its stability and degradation by the proteasome. Acts also by ubiquitinating FBXW7 during prolonged mitotic arrest and promotes FBXW7 proteasomal degradation. Induces subsequently an increase in mitotic slippage and prevents mitotic cell death. In response to influenza infection, mediates interferon-lambda receptor IFNLR1 polyubiquitination and degradation through the ubiquitin-proteasome system by docking with its intracellular receptor domain. The protein is F-box/SPRY domain-containing protein 1 of Mus musculus (Mouse).